A 324-amino-acid polypeptide reads, in one-letter code: Putative arsenical pump-driving ATPase (324 aa).

21-28 (GKGGVGKT) serves as a coordination point for ATP.

It belongs to the arsA ATPase family.

It carries out the reaction arsenite(in) + ATP + H2O = arsenite(out) + ADP + phosphate + H(+). Its function is as follows. Anion-transporting ATPase. Catalyzes the extrusion of arsenite. The sequence is that of Putative arsenical pump-driving ATPase from Methanothermobacter thermautotrophicus (strain ATCC 29096 / DSM 1053 / JCM 10044 / NBRC 100330 / Delta H) (Methanobacterium thermoautotrophicum).